A 200-amino-acid polypeptide reads, in one-letter code: Imidazole glycerol phosphate synthase subunit HisH (200 aa).

Residues 3 to 200 (DVALIDAGGA…LRNFLEMSFP (198 aa)) form the Glutamine amidotransferase type-1 domain. Catalysis depends on C78, which acts as the Nucleophile. Residues H179 and E181 contribute to the active site.

As to quaternary structure, heterodimer of HisH and HisF.

The protein localises to the cytoplasm. It carries out the reaction 5-[(5-phospho-1-deoxy-D-ribulos-1-ylimino)methylamino]-1-(5-phospho-beta-D-ribosyl)imidazole-4-carboxamide + L-glutamine = D-erythro-1-(imidazol-4-yl)glycerol 3-phosphate + 5-amino-1-(5-phospho-beta-D-ribosyl)imidazole-4-carboxamide + L-glutamate + H(+). The enzyme catalyses L-glutamine + H2O = L-glutamate + NH4(+). It functions in the pathway amino-acid biosynthesis; L-histidine biosynthesis; L-histidine from 5-phospho-alpha-D-ribose 1-diphosphate: step 5/9. IGPS catalyzes the conversion of PRFAR and glutamine to IGP, AICAR and glutamate. The HisH subunit catalyzes the hydrolysis of glutamine to glutamate and ammonia as part of the synthesis of IGP and AICAR. The resulting ammonia molecule is channeled to the active site of HisF. The protein is Imidazole glycerol phosphate synthase subunit HisH of Xanthomonas euvesicatoria pv. vesicatoria (strain 85-10) (Xanthomonas campestris pv. vesicatoria).